Reading from the N-terminus, the 444-residue chain is Proline--tRNA ligase (444 aa).

Belongs to the class-II aminoacyl-tRNA synthetase family. ProS type 2 subfamily. Homodimer.

It is found in the cytoplasm. The enzyme catalyses tRNA(Pro) + L-proline + ATP = L-prolyl-tRNA(Pro) + AMP + diphosphate. Functionally, catalyzes the attachment of proline to tRNA(Pro) in a two-step reaction: proline is first activated by ATP to form Pro-AMP and then transferred to the acceptor end of tRNA(Pro). This Pelagibacter ubique (strain HTCC1062) protein is Proline--tRNA ligase.